We begin with the raw amino-acid sequence, 538 residues long: Atos homolog protein B (538 aa).

Disordered stretches follow at residues 1–99 (MRHV…PSTV), 165–185 (QGGQGCLGETPGPAPSGQLHT), and 199–270 (KSPV…GTLG). The segment covering 227-238 (HTPPGPGPPGPC) has biased composition (pro residues). A phosphoserine mark is found at Ser254 and Ser255. Positions 348–430 (LLGNFEESLL…VPKVGTIQVT (83 aa)) are required for macropage invasion. The interval 436-444 (QTVVKMFLV) is transactivation domain 1 (TAD1).

This sequence belongs to the ATOS family.

The protein localises to the nucleus. Functionally, transcription regulator that syncronizes transcriptional and translational programs to promote macrophage invasion of tissues. This Mus musculus (Mouse) protein is Atos homolog protein B.